A 647-amino-acid polypeptide reads, in one-letter code: XK-related protein 4 (647 aa).

The chain crosses the membrane as a helical span at residues 142-162 (WFGLTLFFVVLGSLSVQVFSF). Residues 193 to 238 (VSSGSAAGEGEARPSTPQRQASNASKSNIAATNSGSNSNGATRTSG) form a disordered region. The residue at position 197 (S197) is a Phosphoserine. Residues 207–236 (STPQRQASNASKSNIAATNSGSNSNGATRT) show a composition bias toward polar residues. The next 7 helical transmembrane spans lie at 245 to 265 (CSFC…GQVW), 328 to 348 (LQAL…WALA), 362 to 382 (KPIS…TIAA), 393 to 415 (VFQL…WIVH), 425 to 445 (WEEI…WFNV), 454 to 474 (LFIY…LWYL), and 484 to 504 (FAIP…VFML).

Belongs to the XK family. In terms of assembly, homodimer; homodimerization takes place upon caspase cleavage. Interacts with the processed C-terminus of XRCC4 (protein XRCC4, C-terminus); interaction promotes the phospholipid scramblase activity. Undergoes proteolytic processing by caspase-3 (CASP3), caspase-6 (CASP6) and caspase-7 (CASP7) to generate the XK-related protein 4, processed form, leading to its activation.

The protein resides in the cell membrane. It catalyses the reaction a 1,2-diacyl-sn-glycero-3-phospho-L-serine(in) = a 1,2-diacyl-sn-glycero-3-phospho-L-serine(out). Phospholipid scramblase activity is activated upon caspase cleavage to generate the XK-related protein 4, processed form. Does not act prior the onset of apoptosis. With respect to regulation, homodimerizes upon caspase cleavage. Phospholipid scramblase activity is activated following interaction with the processed C-terminus of XRCC4 (protein XRCC4, C-terminus). Functionally, phospholipid scramblase that promotes phosphatidylserine exposure on apoptotic cell surface. Phosphatidylserine is a specific marker only present at the surface of apoptotic cells and acts as a specific signal for engulfment. This chain is XK-related protein 4, found in Rattus norvegicus (Rat).